The following is a 187-amino-acid chain: Large ribosomal subunit protein uL5 (187 aa).

It belongs to the universal ribosomal protein uL5 family. As to quaternary structure, part of the 50S ribosomal subunit; part of the 5S rRNA/L5/L18/L25 subcomplex. Contacts the 5S rRNA and the P site tRNA. Forms a bridge to the 30S subunit in the 70S ribosome.

This is one of the proteins that bind and probably mediate the attachment of the 5S RNA into the large ribosomal subunit, where it forms part of the central protuberance. In the 70S ribosome it contacts protein S13 of the 30S subunit (bridge B1b), connecting the 2 subunits; this bridge is implicated in subunit movement. Contacts the P site tRNA; the 5S rRNA and some of its associated proteins might help stabilize positioning of ribosome-bound tRNAs. The polypeptide is Large ribosomal subunit protein uL5 (Roseobacter denitrificans (strain ATCC 33942 / OCh 114) (Erythrobacter sp. (strain OCh 114))).